The primary structure comprises 307 residues: Protoheme IX farnesyltransferase (307 aa).

Transmembrane regions (helical) follow at residues 33–53 (IGIV…AFYF), 62–82 (LHIV…SCSI), 111–131 (RVLW…LMTT), 132–152 (VTAA…YTLW), 159–179 (LNTV…WTAV), 185–205 (IVPL…FLAL), 229–249 (MTKR…FYLF), 251–271 (LGIP…LLGL), and 287–307 (FVYS…ATIW).

Belongs to the UbiA prenyltransferase family. Protoheme IX farnesyltransferase subfamily. Interacts with CtaA.

It localises to the cell membrane. It carries out the reaction heme b + (2E,6E)-farnesyl diphosphate + H2O = Fe(II)-heme o + diphosphate. The protein operates within porphyrin-containing compound metabolism; heme O biosynthesis; heme O from protoheme: step 1/1. Its function is as follows. Converts heme B (protoheme IX) to heme O by substitution of the vinyl group on carbon 2 of heme B porphyrin ring with a hydroxyethyl farnesyl side group. In Geobacillus thermodenitrificans (strain NG80-2), this protein is Protoheme IX farnesyltransferase.